Here is a 410-residue protein sequence, read N- to C-terminus: E3 ubiquitin-protein ligase ICP0 (410 aa).

The segment at 46-85 (CPICLDVAATEAQTLPCMHKFCLDCIQRWTLTSTACPLCN) adopts an RING-type zinc-finger fold. The segment at 243–410 (TSESEAHSDS…IFIDLTQDDD (168 aa)) is disordered. Residues 287–315 (APRRSPRRARRAAVLRREQRRTRCLRRGR) are compositionally biased toward basic residues. Composition is skewed to low complexity over residues 329–340 (SSGEGSSAQHGA) and 348–399 (GSAN…PRSA).

In terms of processing, auto-ubiquitinated.

The catalysed reaction is S-ubiquitinyl-[E2 ubiquitin-conjugating enzyme]-L-cysteine + [acceptor protein]-L-lysine = [E2 ubiquitin-conjugating enzyme]-L-cysteine + N(6)-ubiquitinyl-[acceptor protein]-L-lysine.. Functionally, evades nuclear antiviral defenses triggered by dsDNA viruses. Acts during the initial stages of lytic infection and the reactivation of latent viral genome. Prevents the antiviral effect of nuclear bodies by degrading host PML and SP100. In Sus scrofa (Pig), this protein is E3 ubiquitin-protein ligase ICP0 (EP0).